A 320-amino-acid chain; its full sequence is Glutathione synthetase (320 aa).

The ATP-grasp domain maps to 127-312; the sequence is KLAITEFPRF…VAGLMIDALE (186 aa). 153–209 is an ATP binding site; that stretch reads LAEHEDIILKPLDGMGGAGIFRIQNTDHNIGVIIETLTRYGTRTIMAQRFLPEIREG. Positions 283 and 285 each coordinate Mg(2+).

This sequence belongs to the prokaryotic GSH synthase family. Mg(2+) serves as cofactor. Requires Mn(2+) as cofactor.

The enzyme catalyses gamma-L-glutamyl-L-cysteine + glycine + ATP = glutathione + ADP + phosphate + H(+). It participates in sulfur metabolism; glutathione biosynthesis; glutathione from L-cysteine and L-glutamate: step 2/2. The sequence is that of Glutathione synthetase from Nitrosomonas europaea (strain ATCC 19718 / CIP 103999 / KCTC 2705 / NBRC 14298).